A 165-amino-acid polypeptide reads, in one-letter code: Chorismate pyruvate-lyase (165 aa).

4 residues coordinate substrate: methionine 35, arginine 77, leucine 115, and glutamate 156.

The protein belongs to the UbiC family. In terms of assembly, monomer.

The protein resides in the cytoplasm. The catalysed reaction is chorismate = 4-hydroxybenzoate + pyruvate. It functions in the pathway cofactor biosynthesis; ubiquinone biosynthesis. In terms of biological role, removes the pyruvyl group from chorismate, with concomitant aromatization of the ring, to provide 4-hydroxybenzoate (4HB) for the ubiquinone pathway. The sequence is that of Chorismate pyruvate-lyase from Salmonella gallinarum (strain 287/91 / NCTC 13346).